Reading from the N-terminus, the 359-residue chain is Guanine nucleotide-binding protein subunit alpha-11 (359 aa).

S-palmitoyl cysteine attachment occurs at residues C9 and C10. Residues 38-359 form the G-alpha domain; sequence RELKLLLLGT…QHNLKEYNLV (322 aa). Residues 41–54 are G1 motif; it reads KLLLLGTGESGKST. GTP is bound by residues 46–53 and 180–183; these read GTGESGKS and LRVR. S53 provides a ligand contact to Mg(2+). The interval 178 to 186 is G2 motif; it reads DVLRVRVPT. Mg(2+) is bound at residue T186. A G3 motif region spans residues 201–210; the sequence is FRMVDVGGQR. The segment at 270-277 is G4 motif; that stretch reads ILFLNKKD. GTP contacts are provided by residues 274 to 277 and A331; that span reads NKKD. The segment at 329–334 is G5 motif; it reads TCATDT.

This sequence belongs to the G-alpha family. G(q) subfamily. As to quaternary structure, g proteins are composed of 3 units; alpha, beta and gamma. The alpha chain contains the guanine nucleotide binding site.

It localises to the cell membrane. Its subcellular location is the cytoplasm. It carries out the reaction GTP + H2O = GDP + phosphate + H(+). Its function is as follows. Guanine nucleotide-binding proteins (G proteins) function as transducers downstream of G protein-coupled receptors (GPCRs) in numerous signaling cascades. The alpha chain contains the guanine nucleotide binding site and alternates between an active, GTP-bound state and an inactive, GDP-bound state. Signaling by an activated GPCR promotes GDP release and GTP binding. The alpha subunit has a low GTPase activity that converts bound GTP to GDP, thereby terminating the signal. Both GDP release and GTP hydrolysis are modulated by numerous regulatory proteins. Signaling is mediated via phospholipase C-beta-dependent inositol lipid hydrolysis for signal propagation: activates phospholipase C-beta: following GPCR activation, GNA11 activates PLC-beta (PLCB1, PLCB2, PLCB3 or PLCB4), leading to production of diacylglycerol (DAG) and inositol 1,4,5-trisphosphate (IP3). The chain is Guanine nucleotide-binding protein subunit alpha-11 (gna11) from Xenopus laevis (African clawed frog).